A 215-amino-acid chain; its full sequence is MSKVYDWFEERLEIQAIADDVTTKYVPPHVNIFYCLGGVTLVCFIIQFATGFAMTFYYRPTVTEAFNSIQYIMTEVNFGWLIRSIHRWSASMMVLMMILHVFRVYLTGGFKKPRELTWITGVVLAVITVTFGVTGYSLPWDQVGYWAVKIVSGVPEAIPVVGSSIVELLRGGTSVGQSTLTRFYSLHTFVLPWLIAVFMLLHFLMIRKQGISGPL.

A helical membrane pass occupies residues 32–52 (IFYCLGGVTLVCFIIQFATGF). Position 35 (Cys35) interacts with heme c. 2 residues coordinate heme b: His86 and His100. 3 consecutive transmembrane segments (helical) span residues 90-110 (ASMM…TGGF), 116-136 (LTWI…VTGY), and 186-206 (LHTF…FLMI). Positions 187 and 202 each coordinate heme b.

This sequence belongs to the cytochrome b family. PetB subfamily. The 4 large subunits of the cytochrome b6-f complex are cytochrome b6, subunit IV (17 kDa polypeptide, PetD), cytochrome f and the Rieske protein, while the 4 small subunits are PetG, PetL, PetM and PetN. The complex functions as a dimer. Heme b is required as a cofactor. Heme c serves as cofactor.

It is found in the cellular thylakoid membrane. Component of the cytochrome b6-f complex, which mediates electron transfer between photosystem II (PSII) and photosystem I (PSI), cyclic electron flow around PSI, and state transitions. In Acaryochloris marina (strain MBIC 11017), this protein is Cytochrome b6.